The primary structure comprises 463 residues: Cysteine--tRNA ligase (463 aa).

Residue Cys-28 participates in Zn(2+) binding. Residues Val-30 to His-40 carry the 'HIGH' region motif. 3 residues coordinate Zn(2+): Cys-209, His-234, and Glu-238. Positions Lys-266–Ser-270 match the 'KMSKS' region motif. ATP is bound at residue Lys-269.

This sequence belongs to the class-I aminoacyl-tRNA synthetase family. As to quaternary structure, monomer. Zn(2+) is required as a cofactor.

The protein resides in the cytoplasm. It carries out the reaction tRNA(Cys) + L-cysteine + ATP = L-cysteinyl-tRNA(Cys) + AMP + diphosphate. The polypeptide is Cysteine--tRNA ligase (Tolumonas auensis (strain DSM 9187 / NBRC 110442 / TA 4)).